Consider the following 305-residue polypeptide: MSRPRKRGRDIHGVFLLDKPQGMSSNDILQKVKRIYQANKAGHTGALDPLATGMLPICLGEATKFSQFLLDADKRYQVIAKLGERTDTSDAEGQVVETRSVNVTEQKILDSLPHFRGDIMQVPTMFSALKHKGKPLYEYARAGIVVEREARPISIFELNFISYEAPYLTLEVHCSKGTYIRTLVDDLGEYLGCGAHVSMLRRTAVSDYPADKMLTWEQLQQFAQDEDLAALDARLLPVDSAVSKLPVLSLSEEQTKAVGFGQRVKFDNLQQLQGQVRLFSPQNVFLGVAEIGKDNVIRPSRMVNL.

Catalysis depends on Asp48, which acts as the Nucleophile.

Belongs to the pseudouridine synthase TruB family. Type 1 subfamily.

It carries out the reaction uridine(55) in tRNA = pseudouridine(55) in tRNA. Its function is as follows. Responsible for synthesis of pseudouridine from uracil-55 in the psi GC loop of transfer RNAs. This chain is tRNA pseudouridine synthase B, found in Mannheimia succiniciproducens (strain KCTC 0769BP / MBEL55E).